Reading from the N-terminus, the 388-residue chain is Succinate--CoA ligase [ADP-forming] subunit beta (388 aa).

An ATP-grasp domain is found at 9 to 244; it reads KQLFARYGLP…QSQEDPREAQ (236 aa). Residues Lys46, 53 to 55, Glu99, Thr102, and Glu107 each bind ATP; that span reads GRG. Positions 199 and 213 each coordinate Mg(2+). Substrate contacts are provided by residues Asn264 and 321 to 323; that span reads GIV.

The protein belongs to the succinate/malate CoA ligase beta subunit family. As to quaternary structure, heterotetramer of two alpha and two beta subunits. Requires Mg(2+) as cofactor.

The enzyme catalyses succinate + ATP + CoA = succinyl-CoA + ADP + phosphate. It catalyses the reaction GTP + succinate + CoA = succinyl-CoA + GDP + phosphate. Its pathway is carbohydrate metabolism; tricarboxylic acid cycle; succinate from succinyl-CoA (ligase route): step 1/1. In terms of biological role, succinyl-CoA synthetase functions in the citric acid cycle (TCA), coupling the hydrolysis of succinyl-CoA to the synthesis of either ATP or GTP and thus represents the only step of substrate-level phosphorylation in the TCA. The beta subunit provides nucleotide specificity of the enzyme and binds the substrate succinate, while the binding sites for coenzyme A and phosphate are found in the alpha subunit. The polypeptide is Succinate--CoA ligase [ADP-forming] subunit beta (Shigella dysenteriae serotype 1 (strain Sd197)).